The following is a 429-amino-acid chain: Formate-dependent phosphoribosylglycinamide formyltransferase (429 aa).

Residues 26-27 (EL) and E86 each bind N(1)-(5-phospho-beta-D-ribosyl)glycinamide. Residues R118, K159, 199–202 (EEHI), and E207 each bind ATP. In terms of domain architecture, ATP-grasp spans 123-319 (ETLAREAKVP…EFGLHLRAVL (197 aa)). Residues E276 and E288 each coordinate Mg(2+). N(1)-(5-phospho-beta-D-ribosyl)glycinamide contacts are provided by residues D295, K375, and 382-383 (RR).

This sequence belongs to the PurK/PurT family. As to quaternary structure, homodimer.

It carries out the reaction N(1)-(5-phospho-beta-D-ribosyl)glycinamide + formate + ATP = N(2)-formyl-N(1)-(5-phospho-beta-D-ribosyl)glycinamide + ADP + phosphate + H(+). The protein operates within purine metabolism; IMP biosynthesis via de novo pathway; N(2)-formyl-N(1)-(5-phospho-D-ribosyl)glycinamide from N(1)-(5-phospho-D-ribosyl)glycinamide (formate route): step 1/1. Functionally, involved in the de novo purine biosynthesis. Catalyzes the transfer of formate to 5-phospho-ribosyl-glycinamide (GAR), producing 5-phospho-ribosyl-N-formylglycinamide (FGAR). Formate is provided by PurU via hydrolysis of 10-formyl-tetrahydrofolate. In Thermococcus kodakarensis (strain ATCC BAA-918 / JCM 12380 / KOD1) (Pyrococcus kodakaraensis (strain KOD1)), this protein is Formate-dependent phosphoribosylglycinamide formyltransferase.